The chain runs to 188 residues: dCTP deaminase (188 aa).

Residues 111-116, 135-137, Gln-156, Tyr-170, and Gln-180 contribute to the dCTP site; these read KSTYAR and TLE. Glu-137 functions as the Proton donor/acceptor in the catalytic mechanism.

It belongs to the dCTP deaminase family. In terms of assembly, homotrimer.

The enzyme catalyses dCTP + H2O + H(+) = dUTP + NH4(+). It functions in the pathway pyrimidine metabolism; dUMP biosynthesis; dUMP from dCTP (dUTP route): step 1/2. In terms of biological role, catalyzes the deamination of dCTP to dUTP. This chain is dCTP deaminase, found in Cupriavidus metallidurans (strain ATCC 43123 / DSM 2839 / NBRC 102507 / CH34) (Ralstonia metallidurans).